Here is a 513-residue protein sequence, read N- to C-terminus: Nitrogenase molybdenum-iron protein beta chain (513 aa).

[8Fe-7S] cluster-binding residues include cysteine 70, cysteine 95, and cysteine 153.

The protein belongs to the NifD/NifK/NifE/NifN family. Tetramer of two alpha and two beta chains. Forms complex with the iron protein (nitrogenase component 2). The cofactor is [8Fe-7S] cluster.

It catalyses the reaction N2 + 8 reduced [2Fe-2S]-[ferredoxin] + 16 ATP + 16 H2O = H2 + 8 oxidized [2Fe-2S]-[ferredoxin] + 2 NH4(+) + 16 ADP + 16 phosphate + 6 H(+). Functionally, this molybdenum-iron protein is part of the nitrogenase complex that catalyzes the key enzymatic reactions in nitrogen fixation. This is Nitrogenase molybdenum-iron protein beta chain (nifK1) from Sinorhizobium fredii (strain NBRC 101917 / NGR234).